The sequence spans 766 residues: Nucleolar complex protein 2 (766 aa).

The segment covering 1-12 (MKLATKKIKTLG) has biased composition (basic residues). Disordered stretches follow at residues 1-73 (MKLA…EELE), 100-154 (DTDD…DEED), and 674-766 (KTGV…LNEW). Residues 14–29 (SKPDLSKKKPAKDAIR) are compositionally biased toward basic and acidic residues. Residues 33 to 42 (PQTTSETKVT) show a composition bias toward polar residues. Positions 58 to 67 (KTTKKGFKKS) are enriched in basic residues. The segment covering 100 to 115 (DTDDDDDEEGDEEDKE) has biased composition (acidic residues). A Phosphothreonine modification is found at Thr101. Residues 130-140 (EKYHKPSKDLE) are compositionally biased toward basic and acidic residues. A compositionally biased stretch (acidic residues) spans 141–154 (VASDESDFEVDEED). A phosphoserine mark is found at Ser143, Ser146, Ser691, Ser693, and Ser705. Acidic residues predominate over residues 706-720 (DDDDDEDVQEEEEVE). Basic and acidic residues predominate over residues 757–766 (IVKDLDLNEW).

The protein belongs to the NOC2 family.

The protein resides in the nucleus. This chain is Nucleolar complex protein 2, found in Drosophila melanogaster (Fruit fly).